We begin with the raw amino-acid sequence, 236 residues long: Eukaryotic translation initiation factor 3 subunit K (236 aa).

The PCI domain maps to 42 to 222; the sequence is YDKDILVTTL…TIKSRNIEEK (181 aa).

This sequence belongs to the eIF-3 subunit K family. Component of the eukaryotic translation initiation factor 3 (eIF-3) complex.

It is found in the cytoplasm. Component of the eukaryotic translation initiation factor 3 (eIF-3) complex, which is involved in protein synthesis of a specialized repertoire of mRNAs and, together with other initiation factors, stimulates binding of mRNA and methionyl-tRNAi to the 40S ribosome. The eIF-3 complex specifically targets and initiates translation of a subset of mRNAs involved in cell proliferation. In Brugia malayi (Filarial nematode worm), this protein is Eukaryotic translation initiation factor 3 subunit K.